We begin with the raw amino-acid sequence, 349 residues long: Aspartate carbamoyltransferase catalytic subunit (349 aa).

Carbamoyl phosphate contacts are provided by arginine 59 and threonine 60. Lysine 87 contacts L-aspartate. Carbamoyl phosphate is bound by residues arginine 109, histidine 142, and glutamine 145. Residues arginine 182 and arginine 253 each coordinate L-aspartate. Carbamoyl phosphate is bound by residues glycine 294 and proline 295.

The protein belongs to the aspartate/ornithine carbamoyltransferase superfamily. ATCase family. Heterododecamer (2C3:3R2) of six catalytic PyrB chains organized as two trimers (C3), and six regulatory PyrI chains organized as three dimers (R2).

It catalyses the reaction carbamoyl phosphate + L-aspartate = N-carbamoyl-L-aspartate + phosphate + H(+). The protein operates within pyrimidine metabolism; UMP biosynthesis via de novo pathway; (S)-dihydroorotate from bicarbonate: step 2/3. In terms of biological role, catalyzes the condensation of carbamoyl phosphate and aspartate to form carbamoyl aspartate and inorganic phosphate, the committed step in the de novo pyrimidine nucleotide biosynthesis pathway. The chain is Aspartate carbamoyltransferase catalytic subunit from Synechococcus sp. (strain CC9605).